The primary structure comprises 409 residues: Autotransproter heptosyltransferase BAHTCr (409 aa).

3 residues coordinate ADP-D-glycero-beta-D-manno-heptose: Thr-107, Leu-108, and Gly-109. Asp-110 serves as the catalytic Proton acceptor. Residues Gln-224, Thr-226, Lys-230, Arg-257, Gly-302, and Glu-326 each contribute to the ADP-D-glycero-beta-D-manno-heptose site. 4 residues coordinate Fe(3+): Cys-339, Cys-342, Cys-358, and Cys-370.

This sequence belongs to the glycosyltransferase 9 family. In terms of assembly, homododecamer composed of 6 homodimers forming a ring. It depends on Fe(3+) as a cofactor.

The protein resides in the cytoplasm. It catalyses the reaction ADP-D-glycero-beta-D-manno-heptose + L-seryl-[protein] = O-(D-glycero-alpha-D-manno-heptosyl)-L-seryl-[protein] + ADP + H(+). The catalysed reaction is ADP-L-glycero-beta-D-manno-heptose + L-seryl-[protein] = O-(L-glycero-alpha-D-manno-heptosyl)-L-seryl-[protein] + ADP + H(+). Functionally, glycosylates autotransporter CARC. By glycosylating CARC, involved in the colonization of the mouse host gastrointestinal tract. This is Autotransproter heptosyltransferase BAHTCr from Citrobacter rodentium (strain ICC168) (Citrobacter freundii biotype 4280).